The chain runs to 378 residues: 2-aminoethylphosphonate--pyruvate transaminase 1 (378 aa).

At lysine 194 the chain carries N6-(pyridoxal phosphate)lysine.

This sequence belongs to the class-V pyridoxal-phosphate-dependent aminotransferase family. PhnW subfamily. In terms of assembly, homodimer. Requires pyridoxal 5'-phosphate as cofactor.

It catalyses the reaction (2-aminoethyl)phosphonate + pyruvate = phosphonoacetaldehyde + L-alanine. Involved in phosphonate degradation. The protein is 2-aminoethylphosphonate--pyruvate transaminase 1 of Cupriavidus pinatubonensis (strain JMP 134 / LMG 1197) (Cupriavidus necator (strain JMP 134)).